The primary structure comprises 37 residues: Bactericidin B-2 (37 aa).

Glycine 37 is subject to Glycine amide.

The protein belongs to the cecropin family.

Its subcellular location is the secreted. Functionally, cecropins have lytic and antibacterial activity against several Gram-positive and Gram-negative bacteria. The sequence is that of Bactericidin B-2 from Manduca sexta (Tobacco hawkmoth).